Reading from the N-terminus, the 409-residue chain is Effector protein BipC (409 aa).

2 disordered regions span residues Arg-268–Asp-287 and Ser-330–Asp-396. Residues Ala-360–Ser-369 are compositionally biased toward low complexity. Over residues Ala-370–Ala-382 the composition is skewed to basic and acidic residues.

The protein belongs to the SctB/SipC family.

It is found in the secreted. This chain is Effector protein BipC (bipC), found in Burkholderia thailandensis (strain ATCC 700388 / DSM 13276 / CCUG 48851 / CIP 106301 / E264).